Consider the following 209-residue polypeptide: Chaperone protein TorD (209 aa).

The protein belongs to the TorD/DmsD family. TorD subfamily.

The protein resides in the cytoplasm. In terms of biological role, involved in the biogenesis of TorA. Acts on TorA before the insertion of the molybdenum cofactor and, as a result, probably favors a conformation of the apoenzyme that is competent for acquiring the cofactor. The protein is Chaperone protein TorD of Shewanella sp. (strain ANA-3).